The chain runs to 261 residues: GTP cyclohydrolase FolE2 (261 aa).

This sequence belongs to the GTP cyclohydrolase IV family.

It carries out the reaction GTP + H2O = 7,8-dihydroneopterin 3'-triphosphate + formate + H(+). Its pathway is cofactor biosynthesis; 7,8-dihydroneopterin triphosphate biosynthesis; 7,8-dihydroneopterin triphosphate from GTP: step 1/1. Its function is as follows. Converts GTP to 7,8-dihydroneopterin triphosphate. In Geobacter metallireducens (strain ATCC 53774 / DSM 7210 / GS-15), this protein is GTP cyclohydrolase FolE2.